The sequence spans 253 residues: Acidic 26 kDa endochitinase (253 aa).

Residues Met-1–Ala-24 form the signal peptide. Glu-92 (proton donor) is an active-site residue. Cysteines 212 and 244 form a disulfide.

This sequence belongs to the glycosyl hydrolase 19 family. Chitinase class II subfamily.

It is found in the secreted. The protein resides in the extracellular space. It carries out the reaction Random endo-hydrolysis of N-acetyl-beta-D-glucosaminide (1-&gt;4)-beta-linkages in chitin and chitodextrins.. Defense against chitin-containing fungal pathogens. This chain is Acidic 26 kDa endochitinase (CHI3), found in Solanum lycopersicum (Tomato).